Reading from the N-terminus, the 898-residue chain is Neutral alpha-glucosidase C (898 aa).

Residues 154–173 (QRATKGNGQNTPAATSQENQ) are disordered. Residues 157 to 171 (TKGNGQNTPAATSQE) show a composition bias toward polar residues. Residue aspartate 495 is the Nucleophile of the active site. Residue glutamate 498 is part of the active site. Aspartate 571 serves as the catalytic Proton donor.

The protein belongs to the glycosyl hydrolase 31 family.

It catalyses the reaction Hydrolysis of terminal, non-reducing (1-&gt;4)-linked alpha-D-glucose residues with release of alpha-D-glucose.. Its function is as follows. Has alpha-glucosidase activity. The chain is Neutral alpha-glucosidase C (Ganc) from Mus musculus (Mouse).